The chain runs to 885 residues: Exosome complex component 10 (885 aa).

Residue Lys19 forms a Glycyl lysine isopeptide (Lys-Gly) (interchain with G-Cter in SUMO2) linkage. The 167-residue stretch at 289 to 455 folds into the 3'-5' exonuclease domain; the sequence is HFISSLDELV…YIYDKMRLEM (167 aa). Residues Asp313, Glu315, Asp371, and Asp440 each contribute to the Mg(2+) site. The HRDC domain occupies 503 to 583; that stretch reads NTQQLTAFQL…QQAREMPLLK (81 aa). Lys583 participates in a covalent cross-link: Glycyl lysine isopeptide (Lys-Gly) (interchain with G-Cter in SUMO1); alternate. A Glycyl lysine isopeptide (Lys-Gly) (interchain with G-Cter in SUMO2); alternate cross-link involves residue Lys583. A Glycyl lysine isopeptide (Lys-Gly) (interchain with G-Cter in SUMO2) cross-link involves residue Lys710. Composition is skewed to basic and acidic residues over residues 776–794 and 804–816; these read AAKKRERATSDPRTTEQKQ and KPKDPEPPEKEFT. Residues 776-885 form a disordered region; the sequence is AAKKRERATS…RGFRYNWPQR (110 aa). Residue Ser821 is modified to Phosphoserine. Residues Lys826, Lys833, and Lys859 each participate in a glycyl lysine isopeptide (Lys-Gly) (interchain with G-Cter in SUMO2) cross-link. Polar residues predominate over residues 831 to 848; it reads NSKSKVSSQFDPNKQTPS. A compositionally biased stretch (polar residues) spans 861–871; it reads SVGNKSMSFPT. A Glycyl lysine isopeptide (Lys-Gly) (interchain with G-Cter in SUMO2) cross-link involves residue Lys873.

The protein belongs to the exosome component 10/RRP6 family. In terms of assembly, component of the RNA exosome complex. The catalytically inactive RNA exosome core complex (Exo-9) associates with the catalytic subunit EXOSC10/RRP6 (via its N-terminus). Exo-9 may associate with DIS3 to form the nucleolar exosome complex, or DIS3L to form the cytoplasmic exosome complex. The RNA exosome complex interacts with cofactors C1D/RRP47, MPHOSPH6/MPP6 and MTREX/MTR4. Interacts with MTREX; the interaction with MTREX mediates the association of MTREX with nuclear RNA exosomes. Part of the small subunit (SSU) processome, composed of more than 70 proteins and the RNA chaperone small nucleolar RNA (snoRNA) U3. Interacts with ALYREF/THOC4. Interacts with DHX36; this interaction occurs in a RNase-insensitive manner. Interacts with NRDE2. Interacts (via C-terminus) with USP36 (via C-terminus); the interaction is facilitated by the association with RNA and promotes sumoylation of EXOSC10. Mg(2+) serves as cofactor. Post-translationally, sumoylated by USP36; sumoylation does not significantly affect EXOSC10 nucleolar localization and association with core exosome and USP36, but regulates the nucleolar RNA exosome activity in rRNA processing by promoting binding of EXOSC10 to pre-rRNAs. Effects of sumoylation on EXOSC10 levels vary between different studies. Sumoylation of EXOSC10 is required for the modulation of EXOSC10 effects on cellular protein translation and cell proliferation. Sumoylation is promoted by mild hypothermia.

It is found in the cytoplasm. The protein localises to the nucleus. The protein resides in the nucleolus. It localises to the nucleoplasm. Its activity is regulated as follows. Arginine-rich dipeptide repeat proteins expressed from C9orf72-derived repeat RNA interact with EXOSC10 and inhibit its ability to promote degradation of this RNA. In terms of biological role, catalytic component of the RNA exosome complex which has 3'-&gt;5' exoribonuclease activity and participates in a multitude of cellular RNA processing and degradation events. In the nucleus, the RNA exosome complex is involved in proper maturation of stable RNA species such as rRNA, snRNA and snoRNA, in the elimination of RNA processing by-products and non-coding 'pervasive' transcripts, such as antisense RNA species and promoter-upstream transcripts (PROMPTs), and of mRNAs with processing defects, thereby limiting or excluding their export to the cytoplasm. Part of the small subunit (SSU) processome, first precursor of the small eukaryotic ribosomal subunit. During the assembly of the SSU processome in the nucleolus, many ribosome biogenesis factors, an RNA chaperone and ribosomal proteins associate with the nascent pre-rRNA and work in concert to generate RNA folding, modifications, rearrangements and cleavage as well as targeted degradation of pre-ribosomal RNA by the RNA exosome. The RNA exosome may be involved in Ig class switch recombination (CSR) and/or Ig variable region somatic hypermutation (SHM) by targeting AICDA deamination activity to transcribed dsDNA substrates. In the cytoplasm, the RNA exosome complex is involved in general mRNA turnover and specifically degrades inherently unstable mRNAs containing AU-rich elements (AREs) within their 3' untranslated regions, and in RNA surveillance pathways, preventing translation of aberrant mRNAs. It seems to be involved in degradation of histone mRNA. EXOSC10 is required for nucleolar localization of C1D and probably mediates the association of MTREX, C1D and MPHOSPH6 with the RNA exosome involved in the maturation of 5.8S rRNA. Plays a role in the recruitment of replication protein A complex (RPA) and RAD51 to DNA double-strand breaks caused by irradiation, contributing to DNA repair by homologous recombination. Regulates levels of damage-induced RNAs in order to prevent DNA-RNA hybrid formation at DNA double-strand breaks and limit DNA end resection after damage. Plays a role in oocyte development, maturation and survival. Required for normal testis development and mitotic division of spermatogonia. Plays a role in proper embryo development. Required for global protein translation. Required for cell proliferation. Regulates metabolism of C9orf72-derived repeat RNA that can be translated into toxic dipeptide repeat proteins. The sequence is that of Exosome complex component 10 from Homo sapiens (Human).